A 161-amino-acid polypeptide reads, in one-letter code: Nucleotide-binding protein lpg1167 (161 aa).

It belongs to the YajQ family.

Its function is as follows. Nucleotide-binding protein. The sequence is that of Nucleotide-binding protein lpg1167 from Legionella pneumophila subsp. pneumophila (strain Philadelphia 1 / ATCC 33152 / DSM 7513).